Here is a 129-residue protein sequence, read N- to C-terminus: MNWLDTVRWDDKGLVPVIAQEAASGDVLMFAWMNREALQKTAELGQAVYFSRSRGRLWHKGEESGHLQTVHEIRLDCDSDVVLLKVTQLGHEPGIACHTGRHSCFFSLYKDGQWVATEPVLKDPASIYK.

Asp-76 serves as a coordination point for Mg(2+). A Zn(2+)-binding site is contributed by Cys-77. Mg(2+) is bound by residues Asp-78 and Asp-80. The Zn(2+) site is built by Cys-97 and Cys-104.

Belongs to the PRA-CH family. In terms of assembly, homodimer. It depends on Mg(2+) as a cofactor. The cofactor is Zn(2+).

The protein localises to the cytoplasm. The catalysed reaction is 1-(5-phospho-beta-D-ribosyl)-5'-AMP + H2O = 1-(5-phospho-beta-D-ribosyl)-5-[(5-phospho-beta-D-ribosylamino)methylideneamino]imidazole-4-carboxamide. Its pathway is amino-acid biosynthesis; L-histidine biosynthesis; L-histidine from 5-phospho-alpha-D-ribose 1-diphosphate: step 3/9. Its function is as follows. Catalyzes the hydrolysis of the adenine ring of phosphoribosyl-AMP. The protein is Phosphoribosyl-AMP cyclohydrolase of Polaromonas naphthalenivorans (strain CJ2).